The primary structure comprises 280 residues: Ribosomal RNA small subunit methyltransferase A (280 aa).

Residues His15, Leu17, Gly42, Glu64, Asp89, and Asn109 each coordinate S-adenosyl-L-methionine.

It belongs to the class I-like SAM-binding methyltransferase superfamily. rRNA adenine N(6)-methyltransferase family. RsmA subfamily.

Its subcellular location is the cytoplasm. The catalysed reaction is adenosine(1518)/adenosine(1519) in 16S rRNA + 4 S-adenosyl-L-methionine = N(6)-dimethyladenosine(1518)/N(6)-dimethyladenosine(1519) in 16S rRNA + 4 S-adenosyl-L-homocysteine + 4 H(+). Specifically dimethylates two adjacent adenosines (A1518 and A1519) in the loop of a conserved hairpin near the 3'-end of 16S rRNA in the 30S particle. May play a critical role in biogenesis of 30S subunits. In Synechococcus sp. (strain WH7803), this protein is Ribosomal RNA small subunit methyltransferase A.